The primary structure comprises 77 residues: Conotoxin Cl6.12 (77 aa).

A signal peptide spans 1 to 20; the sequence is MKFYLLLTAALLLTAVIIEA. The propeptide occupies 21-36; it reads APTDHQDEARDLMREE. 3 disulfides stabilise this stretch: C43/C58, C51/C62, and C57/C68.

Expressed by the venom duct.

The protein localises to the secreted. This is Conotoxin Cl6.12 from Californiconus californicus (California cone).